The following is a 271-amino-acid chain: Zinc finger protein 501 (271 aa).

9 consecutive C2H2-type zinc fingers follow at residues 22-44 (SKCS…QRIH), 50-72 (YVCS…LRIH), 78-100 (YKCN…LRIH), 106-128 (YKCN…QRIH), 134-156 (YKCA…QRSH), 162-184 (FKCN…QRIH), 190-212 (YTCT…ERTH), 218-240 (YKCS…YRIH), and 246-268 (YECF…QRLH).

Belongs to the krueppel C2H2-type zinc-finger protein family.

It localises to the nucleus. The protein resides in the nucleolus. Its function is as follows. May be involved in transcriptional regulation. Essential for Golgi structural integrity. This is Zinc finger protein 501 (ZNF501) from Pongo abelii (Sumatran orangutan).